We begin with the raw amino-acid sequence, 257 residues long: Triosephosphate isomerase, cytosolic (257 aa).

N10 and K12 together coordinate substrate. H96 serves as the catalytic Electrophile. E167 acts as the Proton acceptor in catalysis.

It belongs to the triosephosphate isomerase family. As to quaternary structure, homodimer. In terms of tissue distribution, higher levels found in leaves than in roots.

It localises to the cytoplasm. It catalyses the reaction D-glyceraldehyde 3-phosphate = dihydroxyacetone phosphate. It participates in carbohydrate biosynthesis; gluconeogenesis. Its pathway is carbohydrate degradation; glycolysis; D-glyceraldehyde 3-phosphate from glycerone phosphate: step 1/1. The protein is Triosephosphate isomerase, cytosolic (TPI) of Stellaria longipes (Longstalk starwort).